The sequence spans 300 residues: Cell surface glycoprotein CD200 receptor 1-A (300 aa).

Residues 1–24 (MEIAGKAVCVFLLLAIIKLRRSEG) form the signal peptide. The Ig-like V-type domain maps to 25–124 (INRVSANLGH…GNFHRLYHLT (100 aa)). Residues 25–213 (INRVSANLGH…SINCSSSYRD (189 aa)) lie on the Extracellular side of the membrane. 2 cysteine pairs are disulfide-bonded: Cys40–Cys108 and Cys143–Cys192. N-linked (GlcNAc...) asparagine glycans are attached at residues Asn45, Asn76, Asn105, Asn171, Asn200, and Asn206. In terms of domain architecture, Ig-like C2-type spans 122–206 (HLTVIVAPRM…ATLNETKSIN (85 aa)). A helical membrane pass occupies residues 214 to 234 (LILCIAIILSFLIIITFMAVI). Topologically, residues 235–300 (YYLKLHGCRF…NLPQGQSPAT (66 aa)) are cytoplasmic.

This sequence belongs to the CD200R family. Glycosylated. In terms of processing, phosphorylated. As to expression, highly expressed in macrophages, peripheral blood lymphocytes (PBL) and peripheral blood mononuclear cells (PBMC). Weakly expressed in bursa, thymus, spleen, liver and brain.

The protein resides in the membrane. It localises to the secreted. The protein is Cell surface glycoprotein CD200 receptor 1-A (CD200R1A) of Gallus gallus (Chicken).